The primary structure comprises 331 residues: MNYQALPKIDLHCHLDGSVRPQTIIDLANQQNVTIPSQDINEISSLMIAPETCQNLEEYLMRFELPLSVMQTEEGIERISFELFEDAAKENVKYFEVRFGPQLHQLQGLSFDQIISSAVKGMQRAEAMYDIKGNYILSILRTMDKGNINDVIDAGAAYLNKGVVAFDLAGAELPGFCHEFIPYVNYAIEKGYRITIHAGEQGVGQNVFDAVSLLGAERVGHGIHIKGHQGAYDLVKEKSVALETCPSSNIQTKAVDVLSNHPIKAFYQGGVLITINTDNRTVSNTTMTDEVRKVMEEFNLSREDYFAIYRVSVEQSFASDEVKQELLKLAE.

Positions 12 and 14 each coordinate Zn(2+). The substrate site is built by histidine 14, aspartate 16, and glycine 170. Zn(2+) is bound at residue histidine 197. Catalysis depends on glutamate 200, which acts as the Proton donor. Aspartate 278 contributes to the Zn(2+) binding site.

This sequence belongs to the metallo-dependent hydrolases superfamily. Adenosine and AMP deaminases family. Adenosine deaminase subfamily. Requires Zn(2+) as cofactor.

It carries out the reaction adenosine + H2O + H(+) = inosine + NH4(+). The catalysed reaction is 2'-deoxyadenosine + H2O + H(+) = 2'-deoxyinosine + NH4(+). Its function is as follows. Catalyzes the hydrolytic deamination of adenosine and 2-deoxyadenosine. This Shewanella woodyi (strain ATCC 51908 / MS32) protein is Adenosine deaminase.